Here is a 275-residue protein sequence, read N- to C-terminus: MANPTVIKLQDGNVMPQLGLGVWQASNEEVITAIQKALEVGYRSIDTAAAYKNEEGVGKALKNASVNREELFITTKLWNDDHKRPREALLDSLKKLQLDYIDLYLMHWPVPAIDHYVEAWKGMIELQKEGLIKSIGVCNFQIHHLQRLIDETGVTPVINQIELHPLMQQRQLHAWNATHKIQTESWSPLAQGGKGVFDQKVIRDLADKYGKTPAQIVIRWHLDSGLVVIPKSVTPSRIAENFDVWDFRLDKDELGEIAKLDQGKRLGPDPDQFGG.

Y51 functions as the Proton donor in the catalytic mechanism. H107 provides a ligand contact to substrate. 187–241 (SPLAQGGKGVFDQKVIRDLADKYGKTPAQIVIRWHLDSGLVVIPKSVTPSRIAEN) serves as a coordination point for NADP(+).

Belongs to the aldo/keto reductase family. As to quaternary structure, monomer.

The protein localises to the cytoplasm. The catalysed reaction is hydroxyacetone + NADP(+) = methylglyoxal + NADPH + H(+). It catalyses the reaction a primary alcohol + NADP(+) = an aldehyde + NADPH + H(+). It carries out the reaction 2-dehydro-L-idonate + NADP(+) = 2,5-didehydro-D-gluconate + NADPH + H(+). Functionally, aldo-keto reductase that significantly contributes to cellular methylglyoxal detoxification by catalyzing the NADPH-dependent conversion of methylglyoxal to acetol. It also exhibits fairly high activity with glyoxal. Shows broad specificity and can use aromatic aldehydes such as 4-nitrobenzaldehyde, 3-nitrobenzaldehyde and benzaldehyde, and phenylglyoxal. Shows beta-keto ester reductase activity toward ethyl acetoacetate and a variety of 2-substituted derivatives. Also catalyzes the reduction of 2,5-diketo-D-gluconic acid (25DKG) to 2-keto-L-gulonic acid (2KLG) and could be involved in ketogluconate metabolism. However, the specific activity of the enzyme toward 2,5-diketo-D-gluconate was reported to be almost 400-fold lower than its activity toward methylglyoxal. Can catalyze in vitro the NADPH-dependent reduction of furfural, a natural product of lignocellulosic decomposition, to the less toxic product, furfuryl alcohol. However, it is unlikely that furfural is a physiological substrate. The chain is Methylglyoxal reductase DkgA from Escherichia coli (strain K12).